We begin with the raw amino-acid sequence, 556 residues long: 2-succinyl-5-enolpyruvyl-6-hydroxy-3-cyclohexene-1-carboxylate synthase (556 aa).

It belongs to the TPP enzyme family. MenD subfamily. In terms of assembly, homodimer. The cofactor is Mg(2+). Mn(2+) is required as a cofactor. It depends on thiamine diphosphate as a cofactor.

It catalyses the reaction isochorismate + 2-oxoglutarate + H(+) = 5-enolpyruvoyl-6-hydroxy-2-succinyl-cyclohex-3-ene-1-carboxylate + CO2. It participates in quinol/quinone metabolism; 1,4-dihydroxy-2-naphthoate biosynthesis; 1,4-dihydroxy-2-naphthoate from chorismate: step 2/7. It functions in the pathway quinol/quinone metabolism; menaquinone biosynthesis. Catalyzes the thiamine diphosphate-dependent decarboxylation of 2-oxoglutarate and the subsequent addition of the resulting succinic semialdehyde-thiamine pyrophosphate anion to isochorismate to yield 2-succinyl-5-enolpyruvyl-6-hydroxy-3-cyclohexene-1-carboxylate (SEPHCHC). This Salmonella dublin (strain CT_02021853) protein is 2-succinyl-5-enolpyruvyl-6-hydroxy-3-cyclohexene-1-carboxylate synthase.